The primary structure comprises 242 residues: MNSSSNEKNKDLNRKNFSSKTDSSNNKAVVLLSGGLDSTTCLYQAIADGKEIQALSFDYGQRHKIELSYAKKVTRKLGIPHTIQKLKPELFLGSSLTQKSLHVPKNSLRKEEIPNTYVPGRNILFLSFAVSLAEGTGSDSIYIGVNSMDYSGYPDCRPEFIKMFEMAIQLGTKKGSQGPSIKILTPLQNLSKKEIVLLGNQLKVPFHLTFSCYDPKNGKACGKCDACLLRKKGFQETGVSEK.

The segment at 1-22 (MNSSSNEKNKDLNRKNFSSKTD) is disordered. Residue 32–42 (LSGGLDSTTCL) coordinates ATP. 4 residues coordinate Zn(2+): Cys-212, Cys-221, Cys-224, and Cys-227.

The protein belongs to the QueC family. Requires Zn(2+) as cofactor.

It carries out the reaction 7-carboxy-7-deazaguanine + NH4(+) + ATP = 7-cyano-7-deazaguanine + ADP + phosphate + H2O + H(+). Its pathway is purine metabolism; 7-cyano-7-deazaguanine biosynthesis. Its function is as follows. Catalyzes the ATP-dependent conversion of 7-carboxy-7-deazaguanine (CDG) to 7-cyano-7-deazaguanine (preQ(0)). The protein is 7-cyano-7-deazaguanine synthase of Leptospira interrogans serogroup Icterohaemorrhagiae serovar copenhageni (strain Fiocruz L1-130).